The following is a 452-amino-acid chain: 23S rRNA (uracil(1939)-C(5))-methyltransferase RlmD (452 aa).

The 57-residue stretch at 1 to 57 (METEVNVAEISALDYEGRGVTKVGGKTVFIKGALPSERVGFRIVRQKKQFDEAEAVA) folds into the TRAM domain. 4 residues coordinate [4Fe-4S] cluster: C70, C76, C79, and C157. S-adenosyl-L-methionine-binding residues include Q269, F298, N303, E319, N347, and D368. The Nucleophile role is filled by C395.

The protein belongs to the class I-like SAM-binding methyltransferase superfamily. RNA M5U methyltransferase family. RlmD subfamily.

It carries out the reaction uridine(1939) in 23S rRNA + S-adenosyl-L-methionine = 5-methyluridine(1939) in 23S rRNA + S-adenosyl-L-homocysteine + H(+). Catalyzes the formation of 5-methyl-uridine at position 1939 (m5U1939) in 23S rRNA. This is 23S rRNA (uracil(1939)-C(5))-methyltransferase RlmD from Neisseria lactamica (strain 020-06).